The following is a 2397-amino-acid chain: Cell wall alpha-1,3-glucan synthase mok11 (2397 aa).

The interval 1683 to 1705 is disordered; the sequence is SNQQSFDFKSSESDSFPQKSPSV. Over residues 1687 to 1698 the composition is skewed to low complexity; it reads SFDFKSSESDSF.

This sequence belongs to the glycosyltransferase group 1 family.

The catalysed reaction is [(1-&gt;3)-alpha-D-glucosyl](n) + UDP-alpha-D-glucose = [(1-&gt;3)-alpha-D-glucosyl](n+1) + UDP + H(+). The protein is Cell wall alpha-1,3-glucan synthase mok11 (mok11) of Schizosaccharomyces pombe (strain 972 / ATCC 24843) (Fission yeast).